Reading from the N-terminus, the 589-residue chain is Kelch-like protein 25 (589 aa).

Residues 46–114 (TDVTLWAGNR…AYSSKIIINE (69 aa)) enclose the BTB domain. Residues 149–250 (CLGMMILSDA…LPSELLKEAV (102 aa)) form the BACK domain. Kelch repeat units lie at residues 296-340 (TLLI…AIGC), 341-388 (KVYV…ELEN), 389-444 (CLYV…SAKL), 446-492 (LFAF…VLGS), 493-538 (QIFI…ASGN), and 539-585 (KVYV…STWK).

Component of the BCR(KLHL25) E3 ubiquitin ligase complex, at least composed of cul3, klhl25 and rbx1.

It participates in protein modification; protein ubiquitination. In terms of biological role, substrate-specific adapter of a BCR (BTB-CUL3-RBX1) E3 ubiquitin ligase complex involved in various processes, such as translation homeostasis and lipid synthesis. The BCR(KLHL25) ubiquitin ligase complex acts by mediating ubiquitination of hypophosphorylated eif4ebp1 (4E-BP1): ubiquitination and subsequent degradation of hypophosphorylated EIF4EBP1 (4E-BP1) probably serves as a homeostatic mechanism to maintain translation and prevent eIF4E inhibition when eIF4E levels are low. The BCR(KLHL25) complex also acts as a regulator of lipid synthesis by mediating ubiquitination and degradation of ACLY, thereby inhibiting lipid synthesis. In Xenopus tropicalis (Western clawed frog), this protein is Kelch-like protein 25.